The sequence spans 231 residues: Cytidylate kinase (231 aa).

ATP is bound at residue 11 to 19 (GHSSCGKST).

Belongs to the cytidylate kinase family. Type 1 subfamily.

The protein resides in the cytoplasm. It catalyses the reaction CMP + ATP = CDP + ADP. The catalysed reaction is dCMP + ATP = dCDP + ADP. The chain is Cytidylate kinase from Porphyromonas gingivalis (strain ATCC BAA-308 / W83).